The chain runs to 330 residues: MEITFLPLILLGAAVLLLAIFFYYVPFLLWISAKVSGVNISLIQLFLMRIRKVPPYIITRAMIEAHKAGIKTLTRDELEAHYLAGGHVEKVVHALVSASKANIDLPFQMATAIDLAGRDVFEAVQMSVNPKVIDTPPVTAVAKDGIQLIAKARVTVRANIKQLVGGAGEETILARVGEGIVSSIGSSESHKTVLENPDSISKLVLRKGLDAGTAFEILSIDIADIDIGKNIGAFLQMDQAQADKNIAQAKAEERRAMAVALEQEMKAKAQEARAKVIEAEAEVPKAMADAFRTGNLGVMDYYKMKNIEADTSMREAIAKPTGAPSKPLKD.

2 helical membrane passes run 5–25 (FLPL…FYYV) and 27–47 (FLLW…QLFL).

This sequence belongs to the flotillin-like FloA family. Homooligomerizes.

Its subcellular location is the cell membrane. It is found in the membrane raft. Functionally, found in functional membrane microdomains (FMM) that may be equivalent to eukaryotic membrane rafts. FMMs are highly dynamic and increase in number as cells age. Flotillins are thought to be important factors in membrane fluidity. The protein is Flotillin-like protein FloA of Parabacteroides distasonis (strain ATCC 8503 / DSM 20701 / CIP 104284 / JCM 5825 / NCTC 11152).